The chain runs to 25 residues: GVWSTVLGGLKKFAKGGLEAIVNPK.

Expressed by the skin glands.

It localises to the secreted. Functionally, has very strong antibacterial activity against Gram-positive bacterium S.aureus and very weak activity against Gram-negative bacterium E.coli. The polypeptide is Antimicrobial peptide 2 (Xenopus tropicalis (Western clawed frog)).